The following is a 335-amino-acid chain: Heat-inducible transcription repressor HrcA (335 aa).

The protein belongs to the HrcA family.

In terms of biological role, negative regulator of class I heat shock genes (grpE-dnaK-dnaJ and groELS operons). Prevents heat-shock induction of these operons. The polypeptide is Heat-inducible transcription repressor HrcA (Mesomycoplasma hyopneumoniae (strain 232) (Mycoplasma hyopneumoniae)).